We begin with the raw amino-acid sequence, 356 residues long: MEIPAVTEPSYNTVAKNDFMSGFLCFSINVRAFGITVLTPLYSLVFIIGVIGHVLVVLVLIQHKRLRNMTSIYLFNLAISDLVFLSTLPFWVDYIMKGDWIFGNAMCKFVSGFYYLGLYSDMFFITLLTIDRYLAVVHVVFALRARTVTFGIISSIITWVLAALVSIPCLYVFKSQMEFTYHTCRAILPRKSLIRFLRFQALTMNILGLILPLLAMIICYTRIINVLHRRPNKKKAKVMRLIFVITLLFFLLLAPYYLAAFVSAFEDVLFTPSCLRSQQVDLSLMITEALAYTHCCVNPVIYVFVGKRFRKYLWQLFRRHTAITLPQWLPFLSVDRAQRASATPPSTVEIETSADL.

At 1–32 the chain is on the extracellular side; sequence MEIPAVTEPSYNTVAKNDFMSGFLCFSINVRA. Residues 33-60 traverse the membrane as a helical segment; sequence FGITVLTPLYSLVFIIGVIGHVLVVLVL. The Cytoplasmic segment spans residues 61–67; it reads IQHKRLR. A helical membrane pass occupies residues 68–92; that stretch reads NMTSIYLFNLAISDLVFLSTLPFWV. The Extracellular segment spans residues 93-108; sequence DYIMKGDWIFGNAMCK. Cysteines 107 and 184 form a disulfide. Residues 109 to 130 form a helical membrane-spanning segment; sequence FVSGFYYLGLYSDMFFITLLTI. At 131-147 the chain is on the cytoplasmic side; the sequence is DRYLAVVHVVFALRART. Residues 148-172 traverse the membrane as a helical segment; sequence VTFGIISSIITWVLAALVSIPCLYV. Residues 173–198 lie on the Extracellular side of the membrane; it reads FKSQMEFTYHTCRAILPRKSLIRFLR. Residues 199–224 traverse the membrane as a helical segment; that stretch reads FQALTMNILGLILPLLAMIICYTRII. The Cytoplasmic segment spans residues 225–240; the sequence is NVLHRRPNKKKAKVMR. The helical transmembrane segment at 241 to 265 threads the bilayer; that stretch reads LIFVITLLFFLLLAPYYLAAFVSAF. Topologically, residues 266-282 are extracellular; that stretch reads EDVLFTPSCLRSQQVDL. The helical transmembrane segment at 283-306 threads the bilayer; it reads SLMITEALAYTHCCVNPVIYVFVG. The Cytoplasmic segment spans residues 307-356; it reads KRFRKYLWQLFRRHTAITLPQWLPFLSVDRAQRASATPPSTVEIETSADL.

Belongs to the G-protein coupled receptor 1 family. Detected in the spleen, liver and leukocytes.

The protein resides in the cell membrane. Functionally, probable receptor for a C-C type chemokine. In Mus musculus (Mouse), this protein is C-C chemokine receptor 1-like protein 1 (Ccr1l1).